A 347-amino-acid polypeptide reads, in one-letter code: 5-deoxyribose 1-phosphate isomerase (347 aa).

Residues 48 to 50, Arg91, and Gln198 contribute to the substrate site; that span reads RGA. Asp239 (proton donor) is an active-site residue. 249–250 is a binding site for substrate; that stretch reads NK.

It belongs to the EIF-2B alpha/beta/delta subunits family. DrdI subfamily.

The enzyme catalyses 5-deoxy-alpha-D-ribose 1-phosphate = 5-deoxy-D-ribulose 1-phosphate. It functions in the pathway carbohydrate degradation. Its function is as follows. Catalyzes the isomerization of 5-deoxy-alpha-D-ribose 1-phosphate to 5-deoxy-D-ribulose 1-phosphate, as part of a 5-deoxyribose salvage pathway that recycles this toxic radical SAM enzyme by-product to mainstream metabolites. The chain is 5-deoxyribose 1-phosphate isomerase from Bacillus thuringiensis (strain Al Hakam).